Reading from the N-terminus, the 697-residue chain is Elongation factor G (697 aa).

Residues 8-290 (ERYRNIGISA…AVLDFLPSPV (283 aa)) form the tr-type G domain. GTP-binding positions include 17-24 (AHIDAGKT), 88-92 (DTPGH), and 142-145 (NKMD).

Belongs to the TRAFAC class translation factor GTPase superfamily. Classic translation factor GTPase family. EF-G/EF-2 subfamily.

Its subcellular location is the cytoplasm. Catalyzes the GTP-dependent ribosomal translocation step during translation elongation. During this step, the ribosome changes from the pre-translocational (PRE) to the post-translocational (POST) state as the newly formed A-site-bound peptidyl-tRNA and P-site-bound deacylated tRNA move to the P and E sites, respectively. Catalyzes the coordinated movement of the two tRNA molecules, the mRNA and conformational changes in the ribosome. This Methylobacillus flagellatus (strain ATCC 51484 / DSM 6875 / VKM B-1610 / KT) protein is Elongation factor G.